Consider the following 78-residue polypeptide: Acyl carrier protein (78 aa).

A Carrier domain is found at S2 to Q77. The residue at position 37 (S37) is an O-(pantetheine 4'-phosphoryl)serine.

This sequence belongs to the acyl carrier protein (ACP) family. Post-translationally, 4'-phosphopantetheine is transferred from CoA to a specific serine of apo-ACP by AcpS. This modification is essential for activity because fatty acids are bound in thioester linkage to the sulfhydryl of the prosthetic group.

It is found in the cytoplasm. It functions in the pathway lipid metabolism; fatty acid biosynthesis. In terms of biological role, carrier of the growing fatty acid chain in fatty acid biosynthesis. The polypeptide is Acyl carrier protein (Rhizobium etli (strain CIAT 652)).